Here is a 324-residue protein sequence, read N- to C-terminus: MNALPSSPETAWLLLVVSLPTSASTARMRFWRGIKALGATALRDGAYLLPNLPGLRAPLQTLATDAASEDGKVWMLSVQAADDQQEAEYRALFDRSTEYAEWMVELSSARSTLSDSDEAELLRVARRHGRGIDAIRKVDFFPNEASARAELQWRDFNAAIDILLSPGEPHGVAGNIPRRDPTQYQGRQWATRQHLWVDRVACAWLIRRFIDPHATFLWLEDVRQCPDDALGFDFDGATFTHIGDRVSFEVLLASFGLDEDKGLARLGQMIHVLDVGGTPVAEASGFEAVLAGARERLPNDDALLDEVGYVLDSLYTHFSSPRKR.

Together with ChrA1, this protein reduces chromate accumulation and is essential for chromate resistance, possibly as a regulatory protein. This chain is Protein ChrB, found in Cupriavidus metallidurans (strain ATCC 43123 / DSM 2839 / NBRC 102507 / CH34) (Ralstonia metallidurans).